The primary structure comprises 84 residues: Small ribosomal subunit protein bS18 (84 aa).

It belongs to the bacterial ribosomal protein bS18 family. In terms of assembly, part of the 30S ribosomal subunit. Forms a tight heterodimer with protein bS6.

Its function is as follows. Binds as a heterodimer with protein bS6 to the central domain of the 16S rRNA, where it helps stabilize the platform of the 30S subunit. The polypeptide is Small ribosomal subunit protein bS18 (Polynucleobacter necessarius subsp. necessarius (strain STIR1)).